Here is a 171-residue protein sequence, read N- to C-terminus: NADH-quinone oxidoreductase subunit I 1 (171 aa).

4Fe-4S ferredoxin-type domains are found at residues 41–71 and 81–110; these read LSRD…LQAT and EFFR…LTPD. C51, C54, C57, C61, C90, C93, C96, and C100 together coordinate [4Fe-4S] cluster.

Belongs to the complex I 23 kDa subunit family. In terms of assembly, NDH-1 is composed of 14 different subunits. Subunits NuoA, H, J, K, L, M, N constitute the membrane sector of the complex. It depends on [4Fe-4S] cluster as a cofactor.

The protein localises to the cell inner membrane. It carries out the reaction a quinone + NADH + 5 H(+)(in) = a quinol + NAD(+) + 4 H(+)(out). NDH-1 shuttles electrons from NADH, via FMN and iron-sulfur (Fe-S) centers, to quinones in the respiratory chain. The immediate electron acceptor for the enzyme in this species is believed to be ubiquinone. Couples the redox reaction to proton translocation (for every two electrons transferred, four hydrogen ions are translocated across the cytoplasmic membrane), and thus conserves the redox energy in a proton gradient. The protein is NADH-quinone oxidoreductase subunit I 1 of Nitrosospira multiformis (strain ATCC 25196 / NCIMB 11849 / C 71).